Consider the following 430-residue polypeptide: Probable beta-1,3-galactosyl-O-glycosyl-glycoprotein beta-1,6-N-acetylglucosaminyltransferase 7 (430 aa).

The Cytoplasmic portion of the chain corresponds to methionine 1 to lysine 8. The chain crosses the membrane as a helical; Signal-anchor for type II membrane protein span at residues serine 9 to leucine 25. Residues arginine 26–arginine 430 lie on the Extracellular side of the membrane. Cystine bridges form between cysteine 53–cysteine 205, cysteine 139–cysteine 354, cysteine 160–cysteine 187, and cysteine 363–cysteine 395. N-linked (GlcNAc...) asparagine glycosylation is present at asparagine 87. A glycan (N-linked (GlcNAc...) asparagine) is linked at asparagine 272.

The protein belongs to the glycosyltransferase 14 family.

The protein localises to the golgi apparatus membrane. It participates in protein modification; protein glycosylation. Its function is as follows. Probable glycosyltransferase. This chain is Probable beta-1,3-galactosyl-O-glycosyl-glycoprotein beta-1,6-N-acetylglucosaminyltransferase 7, found in Homo sapiens (Human).